The chain runs to 209 residues: ATP-dependent Clp protease proteolytic subunit (209 aa).

Serine 101 functions as the Nucleophile in the catalytic mechanism. Residue histidine 126 is part of the active site.

The protein belongs to the peptidase S14 family. Component of the chloroplastic Clp protease core complex.

The protein localises to the plastid. Its subcellular location is the chloroplast stroma. The catalysed reaction is Hydrolysis of proteins to small peptides in the presence of ATP and magnesium. alpha-casein is the usual test substrate. In the absence of ATP, only oligopeptides shorter than five residues are hydrolyzed (such as succinyl-Leu-Tyr-|-NHMec, and Leu-Tyr-Leu-|-Tyr-Trp, in which cleavage of the -Tyr-|-Leu- and -Tyr-|-Trp bonds also occurs).. In terms of biological role, cleaves peptides in various proteins in a process that requires ATP hydrolysis. Has a chymotrypsin-like activity. Plays a major role in the degradation of misfolded proteins. This chain is ATP-dependent Clp protease proteolytic subunit, found in Huperzia lucidula (Shining clubmoss).